The following is a 307-amino-acid chain: Putative F-box/LRR-repeat protein 22 (307 aa).

Residues 1 to 15 (MVTSSSSPPLATSQL) show a composition bias toward polar residues. Positions 1–26 (MVTSSSSPPLATSQLPVMKGEEKPSN) are disordered. In terms of domain architecture, F-box spans 24-71 (PSNWAELPPDLLSSILLRLSPLEILENARKVCRSWRRVSKDPLIWRRI). LRR repeat units follow at residues 108–133 (WRFQ…RVKG), 158–183 (YCSI…KLVG), 185–210 (WSHL…HLQL), 212–237 (SNGL…DLRQ), and 244–270 (FGDL…DYNY). Acidic residues predominate over residues 279–289 (IEDEKGEEEEN). Residues 279–307 (IEDEKGEEEENYSYGSDDTEYGYRRSADF) are disordered.

In Arabidopsis thaliana (Mouse-ear cress), this protein is Putative F-box/LRR-repeat protein 22 (FBL22).